The following is a 612-amino-acid chain: Peroxisomal carnitine O-octanoyltransferase (612 aa).

M1 carries the post-translational modification N-acetylmethionine. An N6-succinyllysine mark is found at K40 and K57. Residue H327 is the Proton acceptor of the active site. Residues K406 and 410-417 each bind CoA; that span reads KKEALHPD. N6-acetyllysine; alternate is present on K406. K406 bears the N6-succinyllysine; alternate mark. 3 residues coordinate (R)-carnitine: Y439, T441, and T452. The short motif at 610 to 612 is the Microbody targeting signal element; that stretch reads AHL.

This sequence belongs to the carnitine/choline acetyltransferase family. Liver.

The protein localises to the peroxisome. The enzyme catalyses octanoyl-CoA + (R)-carnitine = O-octanoyl-(R)-carnitine + CoA. It carries out the reaction 4,8-dimethylnonanoyl-CoA + (R)-carnitine = O-4,8-dimethylnonanoyl-(R)-carnitine + CoA. Its pathway is lipid metabolism; fatty acid beta-oxidation. Beta-oxidation of fatty acids. The highest activity concerns the C6 to C10 chain length substrate. This is Peroxisomal carnitine O-octanoyltransferase (Crot) from Rattus norvegicus (Rat).